Consider the following 443-residue polypeptide: Thymidine phosphorylase (443 aa).

It belongs to the thymidine/pyrimidine-nucleoside phosphorylase family. Homodimer.

It carries out the reaction thymidine + phosphate = 2-deoxy-alpha-D-ribose 1-phosphate + thymine. It participates in pyrimidine metabolism; dTMP biosynthesis via salvage pathway; dTMP from thymine: step 1/2. In terms of biological role, the enzymes which catalyze the reversible phosphorolysis of pyrimidine nucleosides are involved in the degradation of these compounds and in their utilization as carbon and energy sources, or in the rescue of pyrimidine bases for nucleotide synthesis. The protein is Thymidine phosphorylase of Shewanella baltica (strain OS155 / ATCC BAA-1091).